A 293-amino-acid chain; its full sequence is Fructose-bisphosphate aldolase (293 aa).

A D-glyceraldehyde 3-phosphate-binding site is contributed by S50. D85 acts as the Proton donor in catalysis. Zn(2+)-binding residues include H86, D106, E136, and H178. G179 provides a ligand contact to dihydroxyacetone phosphate. H208 provides a ligand contact to Zn(2+). Dihydroxyacetone phosphate-binding positions include 209–211 (GGS) and 230–233 (NVNT).

The protein belongs to the class II fructose-bisphosphate aldolase family. It depends on Zn(2+) as a cofactor.

It carries out the reaction beta-D-fructose 1,6-bisphosphate = D-glyceraldehyde 3-phosphate + dihydroxyacetone phosphate. Its pathway is carbohydrate degradation; glycolysis; D-glyceraldehyde 3-phosphate and glycerone phosphate from D-glucose: step 4/4. In terms of biological role, catalyzes the aldol condensation of dihydroxyacetone phosphate (DHAP or glycerone-phosphate) with glyceraldehyde 3-phosphate (G3P) to form fructose 1,6-bisphosphate (FBP) in gluconeogenesis and the reverse reaction in glycolysis. The sequence is that of Fructose-bisphosphate aldolase (fba) from Streptococcus pyogenes serotype M1.